A 178-amino-acid polypeptide reads, in one-letter code: FXYD domain-containing ion transport regulator 5 (178 aa).

Positions 1–21 are cleaved as a signal peptide; that stretch reads MSPPSQLCLLTIVALILPSEG. A disordered region spans residues 21-126; the sequence is GQTPEKPRSS…YMPPSYIENP (106 aa). Over 22–146 the chain is Extracellular; sequence QTPEKPRSSF…YDNTTLRKRG (125 aa). The segment covering 29–58 has biased composition (polar residues); sequence SSFTAHQSSVTTHVPVPDQTSPGVQTTPPI. The span at 70–79 shows a compositional bias: low complexity; sequence QTAAKTKTQQ. A helical transmembrane segment spans residues 147–164; sequence LLVAAVLFITGIIILTSG. The Cytoplasmic segment spans residues 165-178; the sequence is KCRQFSQLCLNRHR.

This sequence belongs to the FXYD family. Regulatory subunit of the sodium/potassium-transporting ATPase which is composed of a catalytic alpha subunit, a non-catalytic beta subunit and an additional regulatory subunit. The regulatory subunit, a member of the FXYD protein family, modulates the enzymatic activity in a tissue- and isoform-specific way by changing affinities of the Na+/K+-ATPase toward Na(+), K(+) or ATP. Glycosylated. As to expression, spleen, lung, skeletal muscle, and testis.

It localises to the cell membrane. The protein resides in the basolateral cell membrane. Associates with and regulates the activity of the sodium/potassium-transporting ATPase (NKA) which catalyzes the hydrolysis of ATP coupled with the exchange of Na(+) and K(+) ions across the plasma membrane. May increase NKA activity by increasing the apparent affinity for Na(+). Involved in down-regulation of E-cadherin which results in reduced cell adhesion. Promotes metastasis. In Rattus norvegicus (Rat), this protein is FXYD domain-containing ion transport regulator 5 (Fxyd5).